A 211-amino-acid chain; its full sequence is Protein-methionine-sulfoxide reductase heme-binding subunit MsrQ (211 aa).

Helical transmembrane passes span 10–30, 82–102, 116–136, 153–173, and 178–198; these read WLKVCLHLAGLLPFLWLAWAI, LWCFAWATLHLTSYALLELGV, PYLTLGIISWVILLALAFTST, FVYLVAILAPIHYLWSVKIIS, and IYAGLAVLLLALRYKKLLSLF.

It belongs to the MsrQ family. In terms of assembly, heterodimer of a catalytic subunit (MsrP) and a heme-binding subunit (MsrQ). Requires FMN as cofactor. Heme b is required as a cofactor.

It is found in the cell inner membrane. Part of the MsrPQ system that repairs oxidized periplasmic proteins containing methionine sulfoxide residues (Met-O), using respiratory chain electrons. Thus protects these proteins from oxidative-stress damage caused by reactive species of oxygen and chlorine generated by the host defense mechanisms. MsrPQ is essential for the maintenance of envelope integrity under bleach stress, rescuing a wide series of structurally unrelated periplasmic proteins from methionine oxidation, including the primary periplasmic chaperone SurA and the lipoprotein Pal. MsrQ provides electrons for reduction to the reductase catalytic subunit MsrP, using the quinone pool of the respiratory chain. The polypeptide is Protein-methionine-sulfoxide reductase heme-binding subunit MsrQ (Escherichia coli (strain UTI89 / UPEC)).